The following is a 142-amino-acid chain: MKIFFSGSIRGGNKYRRQYGQILAFLQAFGETISEHSDRPEAFDDGGLKGDAAIYARDTHWIREADLLVAEVSQPSIGVGYEIAYAEARNIPILALYHVGAESPMSAMVFGNPKITSIRYDSLSELWPVLKDTLAETHLPPK.

Substrate contacts are provided by residues 4-10 (FFSGSIR), Tyr-19, His-36, Glu-82, and 106-108 (SAM).

The protein belongs to the 2'-deoxynucleoside 5'-phosphate N-hydrolase 1 family. Monomer and homodimer.

It carries out the reaction a pyrimidine 2'-deoxyribonucleoside 5'-phosphate + H2O = a pyrimidine nucleobase + 2-deoxy-D-ribose 5-phosphate. It catalyses the reaction a purine 2'-deoxyribonucleoside 5'-phosphate + H2O = a purine nucleobase + 2-deoxy-D-ribose 5-phosphate. Functionally, catalyzes the cleavage of the N-glycosidic bond of deoxyribonucleoside 5'-monophosphates to yield deoxyribose 5-phosphate and a purine or pyrimidine base. In Syntrophotalea carbinolica (strain DSM 2380 / NBRC 103641 / GraBd1) (Pelobacter carbinolicus), this protein is Putative 2'-deoxynucleoside 5'-phosphate N-hydrolase 1.